Reading from the N-terminus, the 233-residue chain is Segregation and condensation protein A (233 aa).

Belongs to the ScpA family. In terms of assembly, component of a cohesin-like complex composed of ScpA, ScpB and the Smc homodimer, in which ScpA and ScpB bind to the head domain of Smc. The presence of the three proteins is required for the association of the complex with DNA.

The protein localises to the cytoplasm. Its function is as follows. Participates in chromosomal partition during cell division. May act via the formation of a condensin-like complex containing Smc and ScpB that pull DNA away from mid-cell into both cell halves. This Streptococcus pyogenes serotype M1 protein is Segregation and condensation protein A.